The sequence spans 311 residues: MTDRTTDPVPAEPAPVRHPTARLIDGKAFAANLTQTIARDVQSFHDRYRVTPGLAVVLVGNDPASEVYVRNKALQTHRAGMRSFMHMLPATTSQAELLALIGRLNADPEIHGILVQLPLPAGLDPVAVTNAILPDKDVDGLGEVNAGRLALGQPGIVPCTPLGCLMLLKSELGDLRGLHAVIIGASNLVGRPMARLLLAEGCTVTVGHIDTRDPAALARQGDILVVATGCHGLVRGDWIKPGAAVIDVGITRISLPSGKTRLVGDVAFDEAVTRAGCITPVPGGVGPMTIACLLNNTLAAARRIVGATDAA.

NADP(+) contacts are provided by residues glycine 184–serine 186, isoleucine 209, and isoleucine 250.

It belongs to the tetrahydrofolate dehydrogenase/cyclohydrolase family. In terms of assembly, homodimer.

The catalysed reaction is (6R)-5,10-methylene-5,6,7,8-tetrahydrofolate + NADP(+) = (6R)-5,10-methenyltetrahydrofolate + NADPH. The enzyme catalyses (6R)-5,10-methenyltetrahydrofolate + H2O = (6R)-10-formyltetrahydrofolate + H(+). Its pathway is one-carbon metabolism; tetrahydrofolate interconversion. In terms of biological role, catalyzes the oxidation of 5,10-methylenetetrahydrofolate to 5,10-methenyltetrahydrofolate and then the hydrolysis of 5,10-methenyltetrahydrofolate to 10-formyltetrahydrofolate. In Gluconacetobacter diazotrophicus (strain ATCC 49037 / DSM 5601 / CCUG 37298 / CIP 103539 / LMG 7603 / PAl5), this protein is Bifunctional protein FolD.